Consider the following 274-residue polypeptide: Glucosamine-6-phosphate deaminase (274 aa).

Catalysis depends on aspartate 71, which acts as the Proton acceptor; for enolization step. The For ring-opening step role is filled by aspartate 140. The active-site Proton acceptor; for ring-opening step is histidine 142. Glutamate 147 (for ring-opening step) is an active-site residue.

The protein belongs to the glucosamine/galactosamine-6-phosphate isomerase family. NagB subfamily.

It catalyses the reaction alpha-D-glucosamine 6-phosphate + H2O = beta-D-fructose 6-phosphate + NH4(+). It functions in the pathway amino-sugar metabolism; N-acetylneuraminate degradation; D-fructose 6-phosphate from N-acetylneuraminate: step 5/5. Functionally, catalyzes the reversible isomerization-deamination of glucosamine 6-phosphate (GlcN6P) to form fructose 6-phosphate (Fru6P) and ammonium ion. In Fusobacterium nucleatum subsp. nucleatum (strain ATCC 25586 / DSM 15643 / BCRC 10681 / CIP 101130 / JCM 8532 / KCTC 2640 / LMG 13131 / VPI 4355), this protein is Glucosamine-6-phosphate deaminase.